We begin with the raw amino-acid sequence, 240 residues long: MDYFYGTSPPPEYERYASIVDAATLVQGFLWALNYGEASYRSIKDRTYGMAIFPLCCNYAWELVYTVIYSSQNKYERIIMTTWLILNSIMMGFTIKFAPNEWRHAPLVQRNIPFIFLAGVAAFVIAQLALAATVGPGLAMNWVAALCYLLLTIGSLCQLMTRGSSRGVSYTMWLSRFVGTYVGVICVYFRYNYWPQNFSWVDEPIMKCFSGISLAVEIVYGVTLWHIRKQERHHIVEKSK.

A run of 6 helical transmembrane segments spans residues 16–36 (YASI…LNYG), 48–68 (YGMA…YTVI), 78–98 (IIMT…IKFA), 112–132 (IPFI…ALAA), 134–154 (VGPG…LTIG), and 167–187 (GVSY…VICV). Residue Asn-197 is glycosylated (N-linked (GlcNAc...) asparagine). A helical membrane pass occupies residues 205–225 (IMKCFSGISLAVEIVYGVTLW).

The protein belongs to the paxB family.

The protein localises to the membrane. The enzyme catalyses verruculide C epoxide = 3-hydroxypentacecilide A. It functions in the pathway secondary metabolite biosynthesis; terpenoid biosynthesis. Terpene cyclase; part of the gene cluster that mediates the biosynthesis of chrodrimanin B, a meroterpenoid that acts as a potent blocker of insect GABA-gated chloride channels. The first step of the pathway is the biosynthesis of 6-hydroxymellein by the polyketide synthase cdmE. The prenyltransferase cdmH acts as a 6-hydroxymellein 5-farnesyltransferase and produces the hydrophobic metabolite verruculide C. The FAD-dependent monooxygenase cdmI further converts verruculide C into verruculide B. The terpene cyclase cdmG then produced the pentacyclic molecule 3-hydroxypentacecilide A, the backbone structure of chrodrimanin B, via folding the farnesyl moiety of the substrate into the chair-boat conformation. The short-chain dehydrogenase/reductase cdmF functions as the 3-OH dehydrogenase that oxidizes the C-3 hydroxyl group of 3-hydroxypentacecilide A and produces chrodrimanin C, the dehydrogenated product of 3-hydroxypentacecilide A. The cytochrome P450 monooxygenase cdmJ then accepts both 3-hydroxypentacecilide A and chrodrimanin C and functions as a C-7-beta-hydroxylase to produce respectively chrodrimanin H and chrodrimanin F. The dioxygenase cdmA accepts chrodrimanin H to afford chrodrimanin E, which is further transformed to chrodrimanin A by the dioxygenase cdmD. CdmA can also accept chrodrimanin C as substrate to convert it into verruculide A, which is further converted into chrodrimanin T by cdmD. The last step of the biosynthesis is proposed to be performed by the acetyltransferase cdmC which acetylates chrodrimanin A to yield chrodrimanin B. The pathway may also lead to the production of additional shunt products, including chrodrimanins T and U. This chain is Terpene cyclase cdmG, found in Talaromyces verruculosus (Penicillium verruculosum).